Here is a 382-residue protein sequence, read N- to C-terminus: Type II secretion system protein L (382 aa).

The Cytoplasmic segment spans residues 1–233; it reads MSGVSALFLP…QQSSQWRRWR (233 aa). Residues 234-254 traverse the membrane as a helical segment; it reads PLLGLVGLWLVLQWGFTLVQA. The Periplasmic segment spans residues 255–382; sequence WQLQREGDRY…TVSARLVIGG (128 aa).

The protein belongs to the GSP L family. Type II secretion system is composed of four main components: the outer membrane complex, the inner membrane complex, the cytoplasmic secretion ATPase and the periplasm-spanning pseudopilus. Forms homodimers. Interacts with XcpZ/GspM. Interacts with XcpR/GspE and XcpS/GspF.

It is found in the cell inner membrane. Functionally, inner membrane component of the type II secretion system required for the energy-dependent secretion of extracellular factors such as proteases and toxins from the periplasm. Plays a role in the complex assembly and recruits XcpZ resulting in a stable complex in the inner membrane. Provides thus a link between the energy-providing XcpR protein in the cytoplasm and the rest of the T2SS machinery. This chain is Type II secretion system protein L (xcpY), found in Pseudomonas aeruginosa (strain ATCC 15692 / DSM 22644 / CIP 104116 / JCM 14847 / LMG 12228 / 1C / PRS 101 / PAO1).